Consider the following 159-residue polypeptide: UPF0262 protein RD1_1069 (159 aa).

The protein belongs to the UPF0262 family.

This chain is UPF0262 protein RD1_1069, found in Roseobacter denitrificans (strain ATCC 33942 / OCh 114) (Erythrobacter sp. (strain OCh 114)).